Reading from the N-terminus, the 185-residue chain is Bcl-2-like protein 10 (185 aa).

The short motif at 76–95 (LSNDQEFNWGRLVMLLAFVG) is the BH1 element. The BH2 signature appears at 138–149 (WLEAHGGWDGFC). A helical transmembrane segment spans residues 160–182 (FWRRLLIRAILSCFFATAIFYIW).

Belongs to the Bcl-2 family. Interacts with BAX. Interacts with BCL2, BCL2L1/BCLX. Interacts with APAF1. Interacts with ITPR1, ITPR2 and ITPR3; the interaction with ITPR1 is increased in the presence of AHCLY1. Interacts with AHCYL1. Interacts with HIP1R (via ENTH and I/LWEQ domains). Interacts with CASP9. Interacts with BCL2L11/BIM. Interacts with BIK. Interacts with UBQLN4. Interacts with NME2/NM23-H2. Interacts with and PMAIP1/NOXA. Interacts with TPX2. Interacts with UBQLN1; in the cytoplasm. Interacts (via BH1 domain) with BECN1. The cofactor is Ca(2+). In terms of processing, monoubiquitinated by UBQLN1; results in stabilization of BCL2L10 protein abundance and in relocalization from mitochondria to cytoplasm. As to expression, expressed in oligodendroglial lineage cells.

The protein localises to the mitochondrion. It localises to the nucleus membrane. It is found in the endoplasmic reticulum. Its subcellular location is the cytoplasm. The protein resides in the cytoskeleton. The protein localises to the spindle. Promotes cell survival by suppressing apoptosis induced by BAX but not BAK. Increases binding of AHCYL1/IRBIT to ITPR1. Reduces ITPR1-mediated calcium release from the endoplasmic reticulum cooperatively with AHCYL1/IRBIT under normal cellular conditions. Under apoptotic stress conditions, dissociates from ITPR1 and is displaced from mitochondria-associated endoplasmic reticulum membranes, leading to increased Ca(2+) transfer to mitochondria which promotes apoptosis. Required for the correct formation of the microtubule organizing center during oocyte cell division, potentially via regulation of protein abundance and localization of other microtubule organizing center components such as AURKA and TPX2. This is Bcl-2-like protein 10 from Rattus norvegicus (Rat).